Here is a 286-residue protein sequence, read N- to C-terminus: 4-hydroxybenzoate octaprenyltransferase (286 aa).

The next 7 membrane-spanning stretches (helical) occupy residues 20-40 (IGTL…AGGM), 43-63 (LKVL…GCII), 96-116 (LFVV…PLVV), 142-162 (FLGV…TGTV), 167-187 (WWLF…YAMV), 210-230 (QVIA…GWAA), and 234-254 (LVYA…QKLI).

It belongs to the UbiA prenyltransferase family. Mg(2+) serves as cofactor.

It is found in the cell inner membrane. The enzyme catalyses all-trans-octaprenyl diphosphate + 4-hydroxybenzoate = 4-hydroxy-3-(all-trans-octaprenyl)benzoate + diphosphate. The protein operates within cofactor biosynthesis; ubiquinone biosynthesis. In terms of biological role, catalyzes the prenylation of para-hydroxybenzoate (PHB) with an all-trans polyprenyl group. Mediates the second step in the final reaction sequence of ubiquinone-8 (UQ-8) biosynthesis, which is the condensation of the polyisoprenoid side chain with PHB, generating the first membrane-bound Q intermediate 3-octaprenyl-4-hydroxybenzoate. This chain is 4-hydroxybenzoate octaprenyltransferase, found in Shewanella woodyi (strain ATCC 51908 / MS32).